Here is a 160-residue protein sequence, read N- to C-terminus: Ureidoglycolate lyase (160 aa).

The protein belongs to the ureidoglycolate lyase family. As to quaternary structure, homodimer. The cofactor is Ni(2+).

The catalysed reaction is (S)-ureidoglycolate = urea + glyoxylate. The protein operates within nitrogen metabolism; (S)-allantoin degradation. Functionally, catalyzes the catabolism of the allantoin degradation intermediate (S)-ureidoglycolate, generating urea and glyoxylate. Involved in the anaerobic utilization of allantoin as sole nitrogen source. Reinforces the induction of genes involved in the degradation of allantoin and glyoxylate by producing glyoxylate. In Escherichia coli (strain SMS-3-5 / SECEC), this protein is Ureidoglycolate lyase.